The chain runs to 297 residues: Polyhedral envelope protein (297 aa).

It belongs to the baculoviridae PE family.

It localises to the virion membrane. In terms of biological role, major component of the polyhedra envelope. The sequence is that of Polyhedral envelope protein from Orgyia pseudotsugata (Douglas-fir tussock moth).